A 140-amino-acid polypeptide reads, in one-letter code: Nucleoside triphosphatase NudI (140 aa).

A Nudix hydrolase domain is found at Met-1–Leu-140. Positions Gly-38–Gly-58 match the Nudix box motif.

Belongs to the Nudix hydrolase family. NudI subfamily. Monomer. It depends on Mg(2+) as a cofactor.

The catalysed reaction is a ribonucleoside 5'-triphosphate + H2O = a ribonucleoside 5'-phosphate + diphosphate + H(+). The enzyme catalyses a 2'-deoxyribonucleoside 5'-triphosphate + H2O = a 2'-deoxyribonucleoside 5'-phosphate + diphosphate + H(+). It carries out the reaction dUTP + H2O = dUMP + diphosphate + H(+). It catalyses the reaction dTTP + H2O = dTMP + diphosphate + H(+). The catalysed reaction is dCTP + H2O = dCMP + diphosphate + H(+). Its function is as follows. Catalyzes the hydrolysis of nucleoside triphosphates, with a preference for pyrimidine deoxynucleoside triphosphates (dUTP, dTTP and dCTP). This chain is Nucleoside triphosphatase NudI, found in Klebsiella pneumoniae subsp. pneumoniae (strain ATCC 700721 / MGH 78578).